Reading from the N-terminus, the 64-residue chain is UPF0434 protein MADE_1009415 (64 aa).

This sequence belongs to the UPF0434 family.

The polypeptide is UPF0434 protein MADE_1009415 (Alteromonas mediterranea (strain DSM 17117 / CIP 110805 / LMG 28347 / Deep ecotype)).